Reading from the N-terminus, the 59-residue chain is Cytochrome c oxidase subunit 9, mitochondrial (59 aa).

Over 2–8 (TIAPITG) the chain is Mitochondrial matrix. Residues 9-44 (TIKRRVIMDIVLGFSLGGVMASYWWWGFHMDKINKR) traverse the membrane as a helical segment. Residues 45-56 (EKFYAELAERKK) lie on the Mitochondrial intermembrane side of the membrane. Residues 57 to 59 (QEN) constitute a propeptide, removed in mature form.

This sequence belongs to the fungal cytochrome c oxidase subunit 7a family. Component of the cytochrome c oxidase (complex IV, CIV), a multisubunit enzyme composed of 12 subunits. The complex is composed of a catalytic core of 3 subunits COX1, COX2 and COX3, encoded in the mitochondrial DNA, and 9 supernumerary subunits COX4, COX5A (or COX5B), COX6, COX7, COX8, COX9, COX12, COX13 and COX26, which are encoded in the nuclear genome. The complex exists as a monomer or a dimer and forms supercomplexes (SCs) in the inner mitochondrial membrane with a dimer of ubiquinol-cytochrome c oxidoreductase (cytochrome b-c1 complex, complex III, CIII), resulting in 2 different assemblies (supercomplexes III(2)IV and III(2)IV(2)).

It localises to the mitochondrion inner membrane. It functions in the pathway energy metabolism; oxidative phosphorylation. Functionally, component of the cytochrome c oxidase, the last enzyme in the mitochondrial electron transport chain which drives oxidative phosphorylation. The respiratory chain contains 3 multisubunit complexes succinate dehydrogenase (complex II, CII), ubiquinol-cytochrome c oxidoreductase (cytochrome b-c1 complex, complex III, CIII) and cytochrome c oxidase (complex IV, CIV), that cooperate to transfer electrons derived from NADH and succinate to molecular oxygen, creating an electrochemical gradient over the inner membrane that drives transmembrane transport and the ATP synthase. Cytochrome c oxidase is the component of the respiratory chain that catalyzes the reduction of oxygen to water. Electrons originating from reduced cytochrome c in the intermembrane space (IMS) are transferred via the dinuclear copper A center (CU(A)) of COX2 and heme A of COX1 to the active site in COX1, a binuclear center (BNC) formed by heme A3 and copper B (CU(B)). The BNC reduces molecular oxygen to 2 water molecules using 4 electrons from cytochrome c in the IMS and 4 protons from the mitochondrial matrix. This Saccharomyces cerevisiae (strain ATCC 204508 / S288c) (Baker's yeast) protein is Cytochrome c oxidase subunit 9, mitochondrial (COX9).